The following is a 123-amino-acid chain: Large ribosomal subunit protein bL12 (123 aa).

It belongs to the bacterial ribosomal protein bL12 family. As to quaternary structure, homodimer. Part of the ribosomal stalk of the 50S ribosomal subunit. Forms a multimeric L10(L12)X complex, where L10 forms an elongated spine to which 2 to 4 L12 dimers bind in a sequential fashion. Binds GTP-bound translation factors.

Forms part of the ribosomal stalk which helps the ribosome interact with GTP-bound translation factors. Is thus essential for accurate translation. In Zymomonas mobilis subsp. mobilis (strain ATCC 31821 / ZM4 / CP4), this protein is Large ribosomal subunit protein bL12.